The primary structure comprises 417 residues: Tyrosine--tRNA ligase (417 aa).

Position 40 (tyrosine 40) interacts with L-tyrosine. Residues 45–54 (ATAASLHVGH) carry the 'HIGH' region motif. Residues tyrosine 177 and glutamine 181 each coordinate L-tyrosine. The 'KMSKS' region signature appears at 237–241 (KMGKS). Lysine 240 contributes to the ATP binding site. Positions 351–414 (ISVVQLITRS…AGRKRHALIK (64 aa)) constitute an S4 RNA-binding domain.

This sequence belongs to the class-I aminoacyl-tRNA synthetase family. TyrS type 1 subfamily. In terms of assembly, homodimer.

The protein resides in the cytoplasm. It catalyses the reaction tRNA(Tyr) + L-tyrosine + ATP = L-tyrosyl-tRNA(Tyr) + AMP + diphosphate + H(+). In terms of biological role, catalyzes the attachment of tyrosine to tRNA(Tyr) in a two-step reaction: tyrosine is first activated by ATP to form Tyr-AMP and then transferred to the acceptor end of tRNA(Tyr). In Dinoroseobacter shibae (strain DSM 16493 / NCIMB 14021 / DFL 12), this protein is Tyrosine--tRNA ligase.